The following is a 782-amino-acid chain: Calcium-independent phospholipase A2-gamma (782 aa).

N-linked (GlcNAc...) asparagine glycosylation occurs at Asn4. Disordered stretches follow at residues 219–275 and 317–343; these read EKMS…PSAI and SKSQ…AEEK. Positions 220–248 are enriched in basic and acidic residues; the sequence is KMSQQKENEHFRDKSELEDKKVEEGKLRS. The N-linked (GlcNAc...) asparagine glycan is linked to Asn361. A PNPLA domain is found at 445–640; it reads LSIDGGGTRG…LLNNPSALAM (196 aa). A GXGXXG motif is present at residues 449 to 454; it reads GGGTRG. Residues 475–495 form a helical membrane-spanning segment; it reads LFDYICGVSTGAILAFMLGLF. Residues 481–485 carry the GXSXG motif; the sequence is GVSTG. Catalysis depends on Ser483, which acts as the Nucleophile. The active-site Proton acceptor is Asp627. The DGA/G motif lies at 627 to 629; the sequence is DGG. Lys736 bears the N6-succinyllysine mark.

In terms of tissue distribution, expressed in parenchymal tissues including heart, skeletal muscle, placenta, brain, liver and pancreas. Also expressed in bronchial epithelial cells and kidney. Highest expression is observed in skeletal muscle and heart.

Its subcellular location is the endoplasmic reticulum membrane. The protein resides in the mitochondrion membrane. It localises to the peroxisome membrane. The enzyme catalyses a 1,2-diacyl-sn-glycero-3-phosphocholine + H2O = a 1-acyl-sn-glycero-3-phosphocholine + a fatty acid + H(+). It catalyses the reaction a 1,2-diacyl-sn-glycero-3-phosphocholine + H2O = a 2-acyl-sn-glycero-3-phosphocholine + a fatty acid + H(+). The catalysed reaction is a 1,2-diacyl-sn-glycero-3-phosphoethanolamine + H2O = a 1-acyl-sn-glycero-3-phosphoethanolamine + a fatty acid + H(+). It carries out the reaction a 1-O-(1Z-alkenyl)-2-acyl-sn-glycero-3-phosphocholine + H2O = a 1-O-(1Z-alkenyl)-sn-glycero-3-phosphocholine + a fatty acid + H(+). The enzyme catalyses a 1-acyl-sn-glycero-3-phosphocholine + H2O = sn-glycerol 3-phosphocholine + a fatty acid + H(+). It catalyses the reaction 1-acyl-2-(9Z,12Z)-octadecadienoyl-sn-glycero-3-phosphocholine + H2O = a 1-acyl-sn-glycero-3-phosphocholine + (9Z,12Z)-octadecadienoate + H(+). The catalysed reaction is 1-acyl-2-(5Z,8Z,11Z,14Z-eicosatetraenoyl)-sn-glycero-3-phosphocholine + H2O = a 1-acyl-sn-glycero-3-phosphocholine + (5Z,8Z,11Z,14Z)-eicosatetraenoate + H(+). It carries out the reaction 1-hexadecanoyl-2-(5Z,8Z,11Z,14Z-eicosatetraenoyl)-sn-glycero-3-phosphocholine + H2O = 1-hexadecanoyl-sn-glycero-3-phosphocholine + (5Z,8Z,11Z,14Z)-eicosatetraenoate + H(+). The enzyme catalyses 1-octadecanoyl-2-(9Z-octadecenoyl)-sn-glycero-3-phosphocholine + H2O = 1-octadecanoyl-sn-glycero-3-phosphocholine + (9Z)-octadecenoate + H(+). It catalyses the reaction 1-hexadecanoyl-2-(9Z-octadecenoyl)-sn-glycero-3-phosphocholine + H2O = 1-hexadecanoyl-sn-glycero-3-phosphocholine + (9Z)-octadecenoate + H(+). The catalysed reaction is 1-hexadecanoyl-2-(9Z,12Z-octadecadienoyl)-sn-glycero-3-phosphocholine + H2O = (9Z,12Z)-octadecadienoate + 1-hexadecanoyl-sn-glycero-3-phosphocholine + H(+). It carries out the reaction 1-acyl-2-(9Z,12Z)-octadecadienoyl-sn-glycero-3-phosphoethanolamine + H2O = a 1-acyl-sn-glycero-3-phosphoethanolamine + (9Z,12Z)-octadecadienoate + H(+). The enzyme catalyses 1-acyl-2-(5Z,8Z,11Z,14Z)-eicosatetraenoyl-sn-glycero-3-phosphoethanolamine + H2O = a 1-acyl-sn-glycero-3-phosphoethanolamine + (5Z,8Z,11Z,14Z)-eicosatetraenoate + H(+). It catalyses the reaction 1-hexadecanoyl-2-(5Z,8Z,11Z,14Z-eicosatetraenoyl)-sn-glycero-3-phosphoethanolamine + H2O = 1-hexadecanoyl-sn-glycero-3-phosphoethanolamine + (5Z,8Z,11Z,14Z)-eicosatetraenoate + H(+). The catalysed reaction is 1-hexadecanoyl-2-(5Z,8Z,11Z,14Z-eicosatetraenoyl)-sn-glycero-3-phosphocholine + H2O = 2-(5Z,8Z,11Z,14Z)-eicosatetraenoyl-sn-glycero-3-phosphocholine + hexadecanoate + H(+). It carries out the reaction 1-octadecanoyl-2-(9Z-octadecenoyl)-sn-glycero-3-phosphocholine + H2O = 2-(9Z-octadecenoyl)-sn-glycero-3-phosphocholine + octadecanoate + H(+). The enzyme catalyses 1-hexadecanoyl-2-(4Z,7Z,10Z,13Z,16Z,19Z-docosahexaenoyl)-sn-glycero-3-phosphocholine + H2O = 2-(4Z,7Z,10Z,13Z,16Z,19Z-docosahexaenoyl)-sn-glycero-3-phosphocholine + hexadecanoate + H(+). It catalyses the reaction 1-O-(1Z)-hexadecenyl-2 (5Z,8Z,11Z,14Z)-eicosatetraenoyl-sn-glycero-3-phosphocholine + H2O = 1-(1Z-hexadecenyl)-sn-glycero-3-phosphocholine + (5Z,8Z,11Z,14Z)-eicosatetraenoate + H(+). The catalysed reaction is 1-O-(1Z-hexadecenyl)-2-(9Z-octadecenoyl)-sn-glycero-3-phosphocholine + H2O = 1-(1Z-hexadecenyl)-sn-glycero-3-phosphocholine + (9Z)-octadecenoate + H(+). It carries out the reaction 1-hexadecanoyl-sn-glycero-3-phosphocholine + H2O = sn-glycerol 3-phosphocholine + hexadecanoate + H(+). The enzyme catalyses 1',3'-bis-[1,2-di-(9Z,12Z-octadecadienoyl)-sn-glycero-3-phospho]-glycerol + H2O = 1'-[1,2-di-(9Z,12Z-octadecadienoyl)-sn-glycero-3-phospho]-3'-[1-(9Z,12Z-octadecadienoyl)-sn-glycero-3-phospho]-glycerol + (9Z,12Z)-octadecadienoate + H(+). It catalyses the reaction 1'-[1-acyl-2-(9-hydroxy-(10E,12Z)-octadecadienoyl)-sn-glycero-3-phospho]-3'-[1,2-diacyl-sn-glycero-3-phospho]-glycerol + H2O = 9-hydroxy-(10E,12Z)-octadecadienoate + 1'-[1,2-diacyl-sn-glycero-3-phospho],3'-[1-acyl-sn-glycero-3-phospho]-glycerol + H(+). The protein operates within phospholipid metabolism. Calcium-independent phospholipase. Inhibited by (E)-6-bromomethylene-3-1-naphthalenyl-2H-tetrahydropyran-2-one (BEL). The activity toward 1-hexadecanoyl-2-(5Z,8Z,11Z,14Z-eicosatetraenoyl)-sn-glycero-3-phosphocholine is stimulated by cardiolipin. In terms of biological role, calcium-independent and membrane-bound phospholipase, that catalyzes the esterolytic cleavage of fatty acids from glycerophospholipids to yield free fatty acids and lysophospholipids, hence regulating membrane physical properties and the release of lipid second messengers and growth factors. Hydrolyzes phosphatidylethanolamine, phosphatidylcholine and probably phosphatidylinositol with a possible preference for the former. Also has a broad substrate specificity in terms of fatty acid moieties, hydrolyzing saturated and mono-unsaturated fatty acids at nearly equal rates from either the sn-1 or sn-2 position in diacyl phosphatidylcholine. However, has a weak activity toward polyunsaturated fatty acids at the sn-2 position, and thereby favors the production of 2-arachidonoyl lysophosphatidylcholine, a key branch point metabolite in eicosanoid signaling. On the other hand, can produce arachidonic acid from the sn-1 position of diacyl phospholipid and from the sn-2 position of arachidonate-containing plasmalogen substrates. Therefore, plays an important role in the mobilization of arachidonic acid in response to cellular stimuli and the generation of lipid second messengers. Can also hydrolyze lysophosphatidylcholine. In the mitochondrial compartment, catalyzes the hydrolysis and release of oxidized aliphatic chains from cardiolipin and integrates mitochondrial bioenergetics and signaling. It is essential for maintaining efficient bioenergetic mitochondrial function through tailoring mitochondrial membrane lipid metabolism and composition. In Homo sapiens (Human), this protein is Calcium-independent phospholipase A2-gamma.